Reading from the N-terminus, the 242-residue chain is MSMLCYTLIIAFLIGIWAAPKSEDNVPLGSPATSDLSDTSCAQTHEALKTSRNTDQRHPAPKKAEDQELGSAANIIVDPKLFQKRRFQSPRVLFSTQPPPLSRDEQSVEFLENEDALNRNIRSKRENHPVNDHGEYSVCDSVSVWVNKTTATDIKGKPVTVMVDVNLNNHVYKQYFFETKCKNPNPVPSGCRGIDSRHWNSYCTTTQSFVKALTKEGNQASWRFIRIDTACVCVISRKTGNF.

The first 18 residues, 1–18, serve as a signal peptide directing secretion; the sequence is MSMLCYTLIIAFLIGIWA. The propeptide occupies 19-125; that stretch reads APKSEDNVPL…ALNRNIRSKR (107 aa). Positions 48-66 are enriched in basic and acidic residues; it reads LKTSRNTDQRHPAPKKAED. The disordered stretch occupies residues 48–69; the sequence is LKTSRNTDQRHPAPKKAEDQEL. 3 cysteine pairs are disulfide-bonded: Cys139/Cys203, Cys181/Cys231, and Cys191/Cys233. Asn147 is a glycosylation site (N-linked (GlcNAc...) asparagine).

The protein belongs to the NGF-beta family. In terms of assembly, homodimer; non-covalently linked. Expressed by the venom gland.

Its subcellular location is the secreted. Its function is as follows. Nerve growth factor is important for the development and maintenance of the sympathetic and sensory nervous systems. It stimulates division and differentiation of sympathetic and embryonic sensory neurons as well as basal forebrain cholinergic neurons in the brain. Its relevance in the snake venom is not clear. However, it has been shown to inhibit metalloproteinase-dependent proteolysis of platelet glycoprotein Ib alpha, suggesting a metalloproteinase inhibition to prevent metalloprotease autodigestion and/or protection against prey proteases. Binds a lipid between the two protein chains in the homodimer. The lipid-bound form promotes histamine relase from mouse mast cells, contrary to the lipid-free form. This is Venom nerve growth factor 3 from Demansia vestigiata (Lesser black whip snake).